Consider the following 147-residue polypeptide: Hemoglobin subunit beta (147 aa).

Residue Val-2 is modified to N-acetylvaline. One can recognise a Globin domain in the interval 3-147 (HLTPEEKNAV…VANALAHKYH (145 aa)). The residue at position 13 (Thr-13) is a Phosphothreonine. Phosphoserine is present on Ser-45. At Lys-60 the chain carries N6-acetyllysine. Residue His-64 coordinates heme b. An N6-acetyllysine modification is found at Lys-83. His-93 contacts heme b. Cys-94 is subject to S-nitrosocysteine. At Lys-145 the chain carries N6-acetyllysine.

Belongs to the globin family. As to quaternary structure, heterotetramer of two alpha chains and two beta chains. As to expression, red blood cells.

Involved in oxygen transport from the lung to the various peripheral tissues. The protein is Hemoglobin subunit beta (HBB) of Macaca fascicularis (Crab-eating macaque).